Consider the following 218-residue polypeptide: Histone chaperone ASF1B (218 aa).

This sequence belongs to the ASF1 family. In terms of assembly, interacts with histone H3 and histone H4. Interacts strongly with the N-terminus of TOUSLED. Post-translationally, phosphorylated in vitro by TOUSLED.

It is found in the nucleus. Its function is as follows. Histone chaperone that facilitates histone deposition and histone exchange and removal during nucleosome assembly and disassembly. The polypeptide is Histone chaperone ASF1B (ASF1B) (Arabidopsis thaliana (Mouse-ear cress)).